The chain runs to 436 residues: ATP-dependent RNA helicase RhlB (436 aa).

The Q motif signature appears at 9–37; sequence QKFADLDLLPQVIEGLEKKGFDYCTPIQA. The Helicase ATP-binding domain maps to 40–219; the sequence is LPVLLTGQDI…FEHMHNPEHV (180 aa). An ATP-binding site is contributed by 53-60; sequence AQTGTGKT. A DEAD box motif is present at residues 165-168; it reads DEAD. The 146-residue stretch at 245–390 folds into the Helicase C-terminal domain; it reads ALLQTLIEEE…MSDYDASALL (146 aa). Positions 398 to 436 are disordered; sequence RLRTRNPQQRRSNNNGPRNGNRKPNQNRRPRQPRHNKEA. The segment covering 402–421 has biased composition (low complexity); sequence RNPQQRRSNNNGPRNGNRKP. Over residues 422 to 436 the composition is skewed to basic residues; sequence NQNRRPRQPRHNKEA.

Belongs to the DEAD box helicase family. RhlB subfamily. In terms of assembly, component of the RNA degradosome, which is a multiprotein complex involved in RNA processing and mRNA degradation.

The protein localises to the cytoplasm. The catalysed reaction is ATP + H2O = ADP + phosphate + H(+). Its function is as follows. DEAD-box RNA helicase involved in RNA degradation. Has RNA-dependent ATPase activity and unwinds double-stranded RNA. In Vibrio atlanticus (strain LGP32) (Vibrio splendidus (strain Mel32)), this protein is ATP-dependent RNA helicase RhlB.